A 136-amino-acid chain; its full sequence is Cytochrome b5 (136 aa).

One can recognise a Cytochrome b5 heme-binding domain in the interval 5-81 (TKVFTLAEVS…LDEYYVGDID (77 aa)). The heme site is built by H40 and H64. A helical transmembrane segment spans residues 107–127 (FVVKLLQFLVPLIILGVAFGI).

The protein belongs to the cytochrome b5 family. As to expression, is highly expressed in developing seeds, moderately expressed in flowers, and is expressed at low levels in the leaf.

The protein resides in the endoplasmic reticulum membrane. It is found in the microsome membrane. Functionally, cytochrome b5 is a membrane bound hemoprotein which function as an electron carrier for several membrane bound oxygenases. May play a key role in the modification by desaturation of fatty acids in the endoplasmic reticulum, which in the developing seed is utilized for membrane synthesis and in the developmentally regulated production of large amounts of storage lipids. Is involved in the reduction of cytochrome P-450 and may therefore be involved in flavonoid biosynthesis in the petals. The sequence is that of Cytochrome b5 from Nicotiana tabacum (Common tobacco).